An 81-amino-acid polypeptide reads, in one-letter code: Antimicrobial peptide D1 (81 aa).

A signal peptide spans 1-31; sequence MAKTVLGIHVTFLTLLFAVLLLNDVMYTPVE. Disulfide bonds link cysteine 34-cysteine 81, cysteine 45-cysteine 66, cysteine 51-cysteine 75, and cysteine 55-cysteine 77.

Functionally, antimicrobial peptide probably active against fungi like B.sorokiniana, F.oxysporum, F.graminearum, F.avenaceum, B.cinerea, P.beta, P.infestans and P.debaryanum. The polypeptide is Antimicrobial peptide D1 (Stellaria media (Common chickweed)).